The chain runs to 116 residues: Large ribosomal subunit protein bL17 (116 aa).

The protein belongs to the bacterial ribosomal protein bL17 family. Part of the 50S ribosomal subunit. Contacts protein L32.

This is Large ribosomal subunit protein bL17 from Rippkaea orientalis (strain PCC 8801 / RF-1) (Cyanothece sp. (strain PCC 8801)).